Reading from the N-terminus, the 167-residue chain is Lipoprotein signal peptidase (167 aa).

4 helical membrane passes run 8–28 (TFLT…VVLL), 46–66 (WGHF…FGLF), 68–88 (QYKI…ALFL), and 101–121 (IALT…LLHG). Catalysis depends on residues Asp-125 and Asp-143. Residues 139 to 159 (FNLADAFISIGTLLLIGHLYF) form a helical membrane-spanning segment.

It belongs to the peptidase A8 family.

Its subcellular location is the cell inner membrane. It carries out the reaction Release of signal peptides from bacterial membrane prolipoproteins. Hydrolyzes -Xaa-Yaa-Zaa-|-(S,diacylglyceryl)Cys-, in which Xaa is hydrophobic (preferably Leu), and Yaa (Ala or Ser) and Zaa (Gly or Ala) have small, neutral side chains.. It functions in the pathway protein modification; lipoprotein biosynthesis (signal peptide cleavage). In terms of biological role, this protein specifically catalyzes the removal of signal peptides from prolipoproteins. The sequence is that of Lipoprotein signal peptidase from Chlamydia trachomatis serovar L2b (strain UCH-1/proctitis).